The sequence spans 626 residues: (+)-3-carene synthase 1, chloroplastic (626 aa).

A chloroplast-targeting transit peptide spans 1 to 45 (MSLISAVPLASSCVSKSLISSVREHTALRRAIATLQMSRRGKSVA). 3 residues coordinate Mg(2+): D377, D381, and D529. Residues 377–381 (DDMYD) carry the DDXXD motif motif.

The protein belongs to the terpene synthase family. Tpsd subfamily. It depends on Mg(2+) as a cofactor. Mn(2+) is required as a cofactor.

The protein localises to the plastid. It is found in the chloroplast. It carries out the reaction (2E)-geranyl diphosphate = (+)-car-3-ene + diphosphate. The enzyme catalyses (2E)-geranyl diphosphate = terpinolene + diphosphate. The protein operates within terpene metabolism; oleoresin biosynthesis. Its pathway is secondary metabolite biosynthesis; terpenoid biosynthesis. In terms of biological role, monoterpene synthase (TPS) involved in the biosynthesis of monoterpene natural products included in conifer oleoresin secretions and volatile emissions; these compounds contribute to biotic and abiotic stress defense against herbivores and pathogens. Catalyzes the conversion of (2E)-geranyl diphosphate (GPP) to (+)-car-3-ene and, to a lower extent, to terpinolene. This is (+)-3-carene synthase 1, chloroplastic from Pinus contorta (Shore pine).